Consider the following 918-residue polypeptide: MSQFKRQRINPLPGGRNFSGTASTSLLGPPPGLLTPPVATELSQNARHLQGGEKQRVFTGIVTSLHDYFGVVDEEVFFQLSVVKGRLPQLGEKVLVKAAYNPGQAVPWNAVKVQTLSNQPLLKSPAPPLLHVAALGQKQGILGAQPQLIFQPHRIPPLFPQKPLSLFQTSHTLHLSHLNRFPARGPHGRLDQGQSDDYDSKKRKQRAGGEPWGAKKPRHDLPPYRVHLTPYTVDSPICDFLELQRRYRSLLVPSDFLSVHLSWLSAFPLSQPFSLHHPSRIQVSSEKEAAPDAGAEPIPADSDPAYSSKVLLLSSPGLEELYRCCMLFVDDMAEPRETPEHPLKQIKFLLGRKEEEAVLVGGEWSPSLDGLDPQADPQVLVRTAIRCAQAQTGIDLSGCTKWWRFAEFQYLQPGPPRRLQTVVVYLPDVWTIMPTLEEWEALCQQKAAEAAPPTQEAPGETEPTEQAPDALEQAADTSRQNAETPEATTQQETDTDLPEAPPPPLEPAVIARPGCVNLSLHGIVEDRRPKERISFEVMVLAELFLEMLQRDFGYRVYKMLLSLPEKVVSPPEPEKEEAAKEEEAIKEEVVKEPKDEAQNEGPATESEAPLKEDGLLPKPPSSGGEEEEKPRGEASEDLCEMALDPELLLLRDDGEEEFAGAKLEDSEVRSVASNQSEMEFSSLQDMPKELDPSAVLPLDCLLAFVFFDANWCGYLHRRDLERILLTLGIRLSAEQAKQLVSRVVTQNICQYRSLQYSRQEGLDGGLPEEVLFGNLDLLPPSGKSTKPGAAPTEHKALVSHNGSLINVGSLLQRAEQQDSGRLYLENRIHTLELKLEESHNRFSATEVTNKTLAAEMQELRARLAEAEETARTAERQKSQLQRLLQELRRRLTPLQLEIQRVVEKADSWVEKEEPAPSN.

A disordered region spans residues 1–35; the sequence is MSQFKRQRINPLPGGRNFSGTASTSLLGPPPGLLT. Thr35 carries the phosphothreonine modification. Lys112 carries the N6-acetyllysine; by KAT8 modification. Position 123 is an N6-methyllysine (Lys123). A Phosphoserine modification is found at Ser124. Disordered stretches follow at residues 179 to 219, 446 to 510, and 568 to 637; these read NRFP…KPRH, KAAE…PAVI, and VSPP…ASED. Residue Arg180 is modified to Omega-N-methylarginine. The residue at position 215 (Lys215) is an N6-acetyllysine; by KAT8. Composition is skewed to low complexity over residues 447 to 468 and 482 to 492; these read AAEA…EQAP and AETPEATTQQE. Thr454 carries the post-translational modification Phosphothreonine; by ATM, ATR and CK2. Thr484 carries the phosphothreonine modification. The residue at position 569 (Ser569) is a Phosphoserine. The segment covering 572–597 has biased composition (basic and acidic residues); sequence EPEKEEAAKEEEAIKEEVVKEPKDEA. Residue Lys586 forms a Glycyl lysine isopeptide (Lys-Gly) (interchain with G-Cter in SUMO2 and SUMO3); alternate linkage. A Glycyl lysine isopeptide (Lys-Gly) (interchain with G-Cter in SUMO2); alternate cross-link involves residue Lys586. The segment at 605–665 is interaction with MCC; it reads ESEAPLKEDG…EEFAGAKLED (61 aa). Phosphoserine occurs at positions 622, 670, 673, 676, 682, and 803. Residues 699 to 918 form an interaction with NR1D1 region; sequence DCLLAFVFFD…VEKEEPAPSN (220 aa). Residues 824-904 adopt a coiled-coil conformation; that stretch reads LENRIHTLEL…QLEIQRVVEK (81 aa). Residue Thr892 is modified to Phosphothreonine.

In terms of assembly, component of the DBIRD complex. Interacts with ZNF326/ZIRD; the interaction is direct. Interacts (via N-terminus) with SIRT1, which inhibits the deacetylation of substrates. Interacts (via N-terminus) with SUV39H1; this interaction abolishes the interaction with SIRT1. Component of a nuclear receptor-mediated transcription complex composed of at least ZNF335, CCAR2 and EMSY; the complex stimulates the transcription of nuclear receptor target genes such as SOX9 and HOXA1. Within the complex interacts with EMSY and interacts with ZNF335 (via C-terminus). Components of this complex may associate with components of a histone methylation complex to form a complex at least composed of ZNF335, HCFC1, CCAR2, EMSY, MKI67, RBBP5, ASH2L and WDR5. Within this complex, interacts with ASH2L. Interacts with NR1D1. Interacts (via N-terminus) with ESR1 and ESR2. Interacts (via N-terminus) with HDAC3 (via C-terminus). Interacts with HDAC1 and MED2F. Interacts with MCC. Interacts (via N-terminus) with NR1H2 and NR1H3 in a ligand-independent manner. Interacts with CSNK2A1. Interacts (via N-terminus) with p53/TP53. Interacts (via N-terminus) with BRCA1 (via the BRCT domains). Interacts (via N-terminus) with CHEK2 (via protein kinase domain). Interacts with PSEM3. Interacts (via N-terminus) with PSIA3 and SENP1. The sumoylated form shows a preferential interaction with SIRT1 as compared to its unmodified form. Interacts with CECR2; may form part of the CERF-1 and/or CEF-5 ISWI chromatin remodeling complexes in embryonic stem cells. Post-translationally, ATM/ATR-mediated phosphorylation at Thr-454 upon DNA damage promotes binding to SIRT1. Phosphorylation at Thr-454 promotes its sumoylation by switching the binding partner of CCAR2 from SENP1 to PIAS3. In terms of processing, acetylation at Lys-112 and Lys-215 by KAT8 prevents inhibitory binding to SIRT1 and increases its deacetylase activity. Genotoxic stress induces its sumoylation and sumoylation promotes the SIRT1-CCAR2 interaction which in turn inhibits SIRT1-mediated deacetylation of p53/TP53. Sumoylation leads to transcriptional activation of p53/TP53 by sequestering SIRT1 from p53/TP53. Desumoylated by SENP1.

Its subcellular location is the nucleus. The protein resides in the cytoplasm. The protein localises to the cytoskeleton. It localises to the spindle. Its function is as follows. Core component of the DBIRD complex, a multiprotein complex that acts at the interface between core mRNP particles and RNA polymerase II (RNAPII) and integrates transcript elongation with the regulation of alternative splicing: the DBIRD complex affects local transcript elongation rates and alternative splicing of a large set of exons embedded in (A + T)-rich DNA regions. Inhibits SIRT1 deacetylase activity leading to increasing levels of p53/TP53 acetylation and p53-mediated apoptosis. Inhibits SUV39H1 methyltransferase activity. Mediates ligand-dependent transcriptional activation by nuclear hormone receptors. Plays a critical role in maintaining genomic stability and cellular integrity following UV-induced genotoxic stress. Regulates the circadian expression of the core clock components NR1D1 and BMAL1. Enhances the transcriptional repressor activity of NR1D1 through stabilization of NR1D1 protein levels by preventing its ubiquitination and subsequent degradation. Represses the ligand-dependent transcriptional activation function of ESR2. Acts as a regulator of PCK1 expression and gluconeogenesis by a mechanism that involves, at least in part, both NR1D1 and SIRT1. Negatively regulates the deacetylase activity of HDAC3 and can alter its subcellular localization. Positively regulates the beta-catenin pathway (canonical Wnt signaling pathway) and is required for MCC-mediated repression of the beta-catenin pathway. Represses ligand-dependent transcriptional activation function of NR1H2 and NR1H3 and inhibits the interaction of SIRT1 with NR1H3. Plays an important role in tumor suppression through p53/TP53 regulation; stabilizes p53/TP53 by affecting its interaction with ubiquitin ligase MDM2. Represses the transcriptional activator activity of BRCA1. Inhibits SIRT1 in a CHEK2 and PSEM3-dependent manner and inhibits the activity of CHEK2 in vitro. This chain is Cell cycle and apoptosis regulator protein 2 (CCAR2), found in Pongo abelii (Sumatran orangutan).